A 501-amino-acid chain; its full sequence is Pyruvate dehydrogenase protein X component, mitochondrial (501 aa).

Residues 1-53 constitute a mitochondrion transit peptide; that stretch reads MAASWRLHCNQPLLRYLLGFSSRRSLGLAQGAAAWPVDRGASWRWFHSTQLLQ. The 77-residue stretch at 56–132 folds into the Lipoyl-binding domain; it reads PIKVLMPSLS…QLGSLIALMV (77 aa). Residue Lys-97 is modified to N6-lipoyllysine. Residues 145–176 form a disordered region; it reads KDVSAPPPVSKPPAPTQPSPQPQIPCPARKEH. A compositionally biased stretch (pro residues) spans 149–169; that stretch reads APPPVSKPPAPTQPSPQPQIP. In terms of domain architecture, Peripheral subunit-binding (PSBD) spans 183-220; that stretch reads RLSPAARNILEKHSLDASQGTATGPRGIFTKEDALKLV. Lys-194 is modified (N6-acetyllysine). Residue Ser-196 is modified to Phosphoserine. The interval 228-256 is disordered; that stretch reads ITESRPASAPPPSLSASVPPQATAGPSYP. The residue at position 394 (Lys-394) is an N6-succinyllysine.

This sequence belongs to the 2-oxoacid dehydrogenase family. As to quaternary structure, part of the inner core of the multimeric pyruvate dehydrogenase complex that is composed of about 48 DLAT and 12 PDHX molecules. This core binds multiple copies of pyruvate dehydrogenase (subunits PDH1A and PDHB, E1), dihydrolipoamide acetyltransferase (DLAT, E2) and lipoamide dehydrogenase (DLD, E3). Interacts with SIRT4. Interacts with DLD. In terms of processing, delipoylated at Lys-97 by SIRT4, delipoylation decreases the PHD complex activity.

It is found in the mitochondrion matrix. Required for anchoring dihydrolipoamide dehydrogenase (E3) to the dihydrolipoamide transacetylase (E2) core of the pyruvate dehydrogenase complexes of eukaryotes. This specific binding is essential for a functional PDH complex. In Mus musculus (Mouse), this protein is Pyruvate dehydrogenase protein X component, mitochondrial (Pdhx).